A 674-amino-acid chain; its full sequence is DNA-directed RNA polymerase subunit beta' (674 aa).

4 residues coordinate Zn(2+): C69, C71, C87, and C90. 3 residues coordinate Mg(2+): D494, D496, and D498.

The protein belongs to the RNA polymerase beta' chain family. RpoC1 subfamily. As to quaternary structure, in plastids the minimal PEP RNA polymerase catalytic core is composed of four subunits: alpha, beta, beta', and beta''. When a (nuclear-encoded) sigma factor is associated with the core the holoenzyme is formed, which can initiate transcription. The cofactor is Mg(2+). Zn(2+) is required as a cofactor.

The protein localises to the plastid. Its subcellular location is the chloroplast. The catalysed reaction is RNA(n) + a ribonucleoside 5'-triphosphate = RNA(n+1) + diphosphate. Functionally, DNA-dependent RNA polymerase catalyzes the transcription of DNA into RNA using the four ribonucleoside triphosphates as substrates. The chain is DNA-directed RNA polymerase subunit beta' from Psilotum nudum (Whisk fern).